The chain runs to 523 residues: Cytochrome P450 52A3-A (523 aa).

The helical transmembrane segment at 17–34 (WYTILFGAAVTYFLSIAL) threads the bilayer. Cysteine 471 serves as a coordination point for heme.

The protein belongs to the cytochrome P450 family. Requires heme as cofactor.

It localises to the membrane. Its function is as follows. Together with an NADPH cytochrome P450 the enzyme system catalyzes the terminal hydroxylation as the first step in the assimilation of alkanes and fatty acids. The chain is Cytochrome P450 52A3-A (CYP52A3-A) from Candida maltosa (Yeast).